A 393-amino-acid polypeptide reads, in one-letter code: Succinate--CoA ligase [ADP-forming] subunit beta (393 aa).

In terms of domain architecture, ATP-grasp spans 9–242 (KELFAKHGVP…RAATDPLEWK (234 aa)). ATP is bound by residues Lys-45, 52–54 (GRG), Ser-94, and Glu-99. The Mg(2+) site is built by Asn-191 and Asp-211. Substrate contacts are provided by residues Asn-262 and 324-326 (GIT).

Belongs to the succinate/malate CoA ligase beta subunit family. In terms of assembly, heterotetramer of two alpha and two beta subunits. The cofactor is Mg(2+).

The enzyme catalyses succinate + ATP + CoA = succinyl-CoA + ADP + phosphate. It catalyses the reaction GTP + succinate + CoA = succinyl-CoA + GDP + phosphate. It functions in the pathway carbohydrate metabolism; tricarboxylic acid cycle; succinate from succinyl-CoA (ligase route): step 1/1. Succinyl-CoA synthetase functions in the citric acid cycle (TCA), coupling the hydrolysis of succinyl-CoA to the synthesis of either ATP or GTP and thus represents the only step of substrate-level phosphorylation in the TCA. The beta subunit provides nucleotide specificity of the enzyme and binds the substrate succinate, while the binding sites for coenzyme A and phosphate are found in the alpha subunit. This chain is Succinate--CoA ligase [ADP-forming] subunit beta, found in Mycobacterium leprae (strain Br4923).